Reading from the N-terminus, the 677-residue chain is Methionine--tRNA ligase (677 aa).

The short motif at 15 to 25 is the 'HIGH' region element; that stretch reads PYANGSIHLGH. Zn(2+) is bound by residues Cys146, Cys149, Cys159, and Cys162. Positions 333–337 match the 'KMSKS' region motif; sequence KMSKS. Lys336 lines the ATP pocket. Positions 575–677 constitute a tRNA-binding domain; sequence DFAKIDLRVA…DGAKPGQQVK (103 aa).

The protein belongs to the class-I aminoacyl-tRNA synthetase family. MetG type 1 subfamily. As to quaternary structure, homodimer. Requires Zn(2+) as cofactor.

Its subcellular location is the cytoplasm. The catalysed reaction is tRNA(Met) + L-methionine + ATP = L-methionyl-tRNA(Met) + AMP + diphosphate. Its function is as follows. Is required not only for elongation of protein synthesis but also for the initiation of all mRNA translation through initiator tRNA(fMet) aminoacylation. This chain is Methionine--tRNA ligase, found in Salmonella paratyphi B (strain ATCC BAA-1250 / SPB7).